Consider the following 56-residue polypeptide: Envelope protein H3 (56 aa).

The protein belongs to the orthopoxvirus OPG108 family. In terms of processing, does not contain disulfide bonds.

The protein localises to the virion membrane. Its function is as follows. Envelope protein that binds to heparan sulfate on the cell surface and might provide virion attachment to target cell. The sequence is that of Envelope protein H3 (OPG108) from Vaccinia virus (strain L-IVP) (VACV).